Consider the following 113-residue polypeptide: Death-associated protein-like 1.L (113 aa).

The disordered stretch occupies residues 1–57 (MAKEQKMQSSPQALKAGHLPAVKAGGMRVSKKQGNEENSAPEKNAKKTLQEKPSSVL).

It belongs to the DAP-DAPL1 family. In terms of assembly, associates with ribosomes; preventing translation. Interacts with eiF5a (eif5a and eif5a2); preventing translation.

In terms of biological role, ribosome-binding protein that promotes ribosome hibernation, a process during which ribosomes are stabilized in an inactive state and preserved from proteasomal degradation. Acts via its association with eiF5a (eif5a and eif5a2) at the polypeptide exit tunnel of the ribosome, preventing mRNA translation. Plays a key role in ribosome hibernation in the mature egg by preventing mRNA translation, leading to ribosome inactivation. Ribosomes, which are produced in large quantities during oogenesis, are stored and translationally repressed in the egg and early embryo. In Xenopus laevis (African clawed frog), this protein is Death-associated protein-like 1.L (dapl1.L).